The following is a 254-amino-acid chain: 3-oxo-5-alpha-steroid 4-dehydrogenase 2 (254 aa).

Helical transmembrane passes span 8–28 (SPVL…LYFA), 72–92 (PRSL…AHYF), 146–166 (FSLG…SDYI), and 206–226 (LATW…FLGL).

Belongs to the steroid 5-alpha reductase family.

The protein localises to the microsome membrane. It localises to the endoplasmic reticulum membrane. The enzyme catalyses a 3-oxo-5alpha-steroid + NADP(+) = a 3-oxo-Delta(4)-steroid + NADPH + H(+). The catalysed reaction is 17beta-hydroxy-5alpha-androstan-3-one + NADP(+) = testosterone + NADPH + H(+). It catalyses the reaction 5alpha-pregnane-3,20-dione + NADP(+) = progesterone + NADPH + H(+). Its function is as follows. Converts testosterone (T) into 5-alpha-dihydrotestosterone (DHT) and progesterone or corticosterone into their corresponding 5-alpha-3-oxosteroids. It plays a central role in sexual differentiation and androgen physiology. The protein is 3-oxo-5-alpha-steroid 4-dehydrogenase 2 (SRD5A2) of Sus scrofa (Pig).